The sequence spans 866 residues: N-alpha-acetyltransferase 15, NatA auxiliary subunit (866 aa).

TPR repeat units follow at residues Gly-46–Ser-79, His-80–Asn-113, Arg-148–Lys-184, and Leu-224–Asn-257. Position 262 is an N6-acetyllysine (Lys-262). Ser-302 is modified (phosphoserine). TPR repeat units follow at residues Leu-374–Leu-407, Glu-409–Asp-441, and Met-485–Gln-522. The tract at residues Lys-500 to Ile-866 is interaction with HYPK. Phosphoserine occurs at positions 537 and 588. The segment covering Glu-579–Lys-594 has biased composition (basic and acidic residues). The tract at residues Glu-579 to Leu-642 is disordered. Over residues Leu-595 to Lys-604 the composition is skewed to basic residues. Residues Ala-606–Gln-621 show a composition bias toward basic and acidic residues. One copy of the TPR 8 repeat lies at Ile-672–His-705. Lys-735 and Lys-756 each carry N6-acetyllysine. Residues Ser-855 and Ser-856 each carry the phosphoserine modification.

In terms of assembly, component of the N-terminal acetyltransferase A (NatA) complex composed of NAA10 or probably NAA11 and NAA15. Interacts with XRCC6, NAA50 and XRCC5. Associates with HYPK when in a complex with NAA10. Interaction with HYPK reduces the capacity to interact with NAA50. Cleaved by caspases during apoptosis.

Its subcellular location is the cytoplasm. The protein resides in the nucleus. Its function is as follows. Auxillary subunit of the N-terminal acetyltransferase A (NatA) complex which displays alpha (N-terminal) acetyltransferase activity. The NAT activity may be important for vascular, hematopoietic and neuronal growth and development. Required to control retinal neovascularization in adult ocular endothelial cells. In complex with XRCC6 and XRCC5 (Ku80), up-regulates transcription from the osteocalcin promoter. The sequence is that of N-alpha-acetyltransferase 15, NatA auxiliary subunit (NAA15) from Pongo abelii (Sumatran orangutan).